The chain runs to 271 residues: Solute carrier family 66 member 2 (271 aa).

3 helical membrane passes run 7–27 (GWLL…AMVF), 49–69 (FSTH…LFWF), and 72–92 (HFES…LLML). The region spanning 14-80 (HQLVSWVAAG…RHFESPLLWQ (67 aa)) is the PQ-loop 1 domain. S110 is modified (phosphoserine). A run of 3 helical transmembrane segments spans residues 143 to 163 (FADY…ITYL), 168 to 188 (ALFV…LGVP), and 232 to 252 (VCGL…YAFA). The PQ-loop 2 domain occupies 149-215 (CVLAFTGVAG…MVLMWTSGDT (67 aa)).

The protein resides in the membrane. This Rattus norvegicus (Rat) protein is Solute carrier family 66 member 2 (Slc66a2).